The sequence spans 347 residues: Ataxin-7-like protein 3 (347 aa).

Residues 84–105 (CVCPNCSRSIAASRFAPHLEKC) form an SGF11-type zinc finger. Residues 116–125 (ANRRIANSNN) are compositionally biased toward low complexity. Residues 116 to 184 (ANRRIANSNN…GELSNSDPFK (69 aa)) are disordered. 2 positions are modified to phosphoserine: S129 and S131. The span at 132 to 141 (DQEDNDDIND) shows a compositional bias: acidic residues. Residues 196-263 (LGPEELRSLL…SLDNDGFDMT (68 aa)) enclose the SCA7 domain. Low complexity predominate over residues 275–288 (DGSSDLSPSDSGSS). The segment at 275 to 347 (DGSSDLSPSD…PTPSIYDDIN (73 aa)) is disordered. 3 positions are modified to phosphoserine: S278, S281, and S326.

It belongs to the SGF11 family. Component of some SAGA transcription coactivator-HAT complexes, at least composed of ATXN7, ATXN7L3, ENY2, GCN5L2, SUPT3H, TAF10, TRRAP and USP22. Within the SAGA complex, ENY2, ATXN7, ATXN7L3, and USP22 form an additional subcomplex of SAGA called the DUB module (deubiquitination module). Interacts directly with ENY2 and USP22.

The protein resides in the nucleus. Component of the transcription regulatory histone acetylation (HAT) complex SAGA, a multiprotein complex that activates transcription by remodeling chromatin and mediating histone acetylation and deubiquitination. Within the SAGA complex, participates in a subcomplex that specifically deubiquitinates both histones H2A and H2B. The SAGA complex is recruited to specific gene promoters by activators such as MYC, where it is required for transcription. Required for nuclear receptor-mediated transactivation. Within the complex, it is required to recruit USP22 and ENY2 into the SAGA complex. Regulates H2B monoubiquitination (H2Bub1) levels. Affects subcellular distribution of ENY2, USP22 and ATXN7L3B. The chain is Ataxin-7-like protein 3 (Atxn7l3) from Mus musculus (Mouse).